A 377-amino-acid chain; its full sequence is Histone deacetylase 8 (377 aa).

A histone deacetylase region spans residues 14 to 324 (LPPVYIYSPE…WTYLTGVILG (311 aa)). At Ser-39 the chain carries Phosphoserine. Asp-101 provides a ligand contact to substrate. The active-site Proton acceptor is His-143. Gly-151 contributes to the substrate binding site. Residues Asp-178, His-180, and Asp-267 each coordinate a divalent metal cation. Residue Tyr-306 participates in substrate binding.

This sequence belongs to the histone deacetylase family. HD type 1 subfamily. As to quaternary structure, interacts with CBFA2T3. Interacts with phosphorylated SMG5/EST1B; this interaction protects SMG5 from ubiquitin-mediated degradation. Associates with alpha-SMA (smooth muscle alpha-actin). A divalent metal cation serves as cofactor. Post-translationally, phosphorylated by PKA on serine 39. Phosphorylation reduces deacetylase activity observed preferentially on histones H3 and H4.

The protein resides in the nucleus. It is found in the chromosome. The protein localises to the cytoplasm. It catalyses the reaction N(6)-acetyl-L-lysyl-[histone] + H2O = L-lysyl-[histone] + acetate. It carries out the reaction N(6)-acetyl-L-lysyl-[protein] + H2O = L-lysyl-[protein] + acetate. The catalysed reaction is N(6)-(2E)-butenoyl-L-lysyl-[protein] + H2O = (2E)-2-butenoate + L-lysyl-[protein]. Its activity is inhibited by trichostatin A (TSA) and butyrate, 2 well known histone deacetylase inhibitors. Functionally, histone deacetylase that catalyzes the deacetylation of lysine residues on the N-terminal part of the core histones (H2A, H2B, H3 and H4). Histone deacetylation gives a tag for epigenetic repression and plays an important role in transcriptional regulation, cell cycle progression and developmental events. Histone deacetylases act via the formation of large multiprotein complexes. Also involved in the deacetylation of cohesin complex protein SMC3 regulating release of cohesin complexes from chromatin. May play a role in smooth muscle cell contractility. In addition to protein deacetylase activity, also has protein-lysine deacylase activity: acts as a protein decrotonylase by mediating decrotonylation ((2E)-butenoyl) of histones. The sequence is that of Histone deacetylase 8 (HDAC8) from Bos taurus (Bovine).